The sequence spans 409 residues: Putative competence-damage inducible protein (409 aa).

The protein belongs to the CinA family.

This is Putative competence-damage inducible protein from Clostridium botulinum (strain Okra / Type B1).